We begin with the raw amino-acid sequence, 1727 residues long: Nucleoporin alm1 (1727 aa).

Coiled coils occupy residues 57–361, 443–463, 542–740, 804–1106, 1223–1427, 1497–1555, and 1601–1664; these read QEVN…KNTS, NFLS…QAEL, IKEA…AEEL, AARK…INES, GERS…QLNK, NEEE…AESA, and QKEW…KKDS. A compositionally biased stretch (polar residues) spans 1423–1448; that stretch reads EQLNKPSATPTATTQSEPSTVSLEEF. Disordered regions lie at residues 1423–1459, 1477–1500, and 1656–1727; these read EQLN…SSTQ, EKVR…NEEE, and LEQS…KKAK. Composition is skewed to polar residues over residues 1672–1684 and 1702–1714; these read ASKN…SNSE and VDTN…SSSD. A Phosphoserine modification is found at Ser1706.

It localises to the nucleus. The protein localises to the nuclear pore complex. Its subcellular location is the nucleus envelope. In terms of biological role, maintains the proteasome and its anchor cut8 at the nucleus envelope and is required for kinetochore component proteostasis. Proper kinetochore stoichiometry ensures the correct attachment of kinetochores to spindle microtubules during cytokinesis. Required for the localization of spindle assembly checkpoint (SAC) protein mad2 and bub1 to the nucleus envelope during interphase, but not their localization during mitosis. This is Nucleoporin alm1 from Schizosaccharomyces pombe (strain 972 / ATCC 24843) (Fission yeast).